Reading from the N-terminus, the 184-residue chain is ATP synthase subunit delta (184 aa).

Belongs to the ATPase delta chain family. F-type ATPases have 2 components, F(1) - the catalytic core - and F(0) - the membrane proton channel. F(1) has five subunits: alpha(3), beta(3), gamma(1), delta(1), epsilon(1). F(0) has three main subunits: a(1), b(2) and c(10-14). The alpha and beta chains form an alternating ring which encloses part of the gamma chain. F(1) is attached to F(0) by a central stalk formed by the gamma and epsilon chains, while a peripheral stalk is formed by the delta and b chains.

Its subcellular location is the cell inner membrane. Its function is as follows. F(1)F(0) ATP synthase produces ATP from ADP in the presence of a proton or sodium gradient. F-type ATPases consist of two structural domains, F(1) containing the extramembraneous catalytic core and F(0) containing the membrane proton channel, linked together by a central stalk and a peripheral stalk. During catalysis, ATP synthesis in the catalytic domain of F(1) is coupled via a rotary mechanism of the central stalk subunits to proton translocation. In terms of biological role, this protein is part of the stalk that links CF(0) to CF(1). It either transmits conformational changes from CF(0) to CF(1) or is implicated in proton conduction. This is ATP synthase subunit delta from Rickettsia peacockii (strain Rustic).